The sequence spans 85 residues: Large ribosomal subunit protein bL27 (85 aa).

Residues M1–R20 form a disordered region.

Belongs to the bacterial ribosomal protein bL27 family.

This Citrobacter koseri (strain ATCC BAA-895 / CDC 4225-83 / SGSC4696) protein is Large ribosomal subunit protein bL27.